Here is a 161-residue protein sequence, read N- to C-terminus: Nucleotide-binding protein Bmul_0741/BMULJ_02519 (161 aa).

It belongs to the YajQ family.

In terms of biological role, nucleotide-binding protein. This Burkholderia multivorans (strain ATCC 17616 / 249) protein is Nucleotide-binding protein Bmul_0741/BMULJ_02519.